Reading from the N-terminus, the 72-residue chain is Translation initiation factor IF-1 (72 aa).

Positions 1–72 (MAKEGAIEVE…TRGRIVYRYK (72 aa)) constitute an S1-like domain.

This sequence belongs to the IF-1 family. As to quaternary structure, component of the 30S ribosomal translation pre-initiation complex which assembles on the 30S ribosome in the order IF-2 and IF-3, IF-1 and N-formylmethionyl-tRNA(fMet); mRNA recruitment can occur at any time during PIC assembly.

The protein localises to the cytoplasm. Its function is as follows. One of the essential components for the initiation of protein synthesis. Stabilizes the binding of IF-2 and IF-3 on the 30S subunit to which N-formylmethionyl-tRNA(fMet) subsequently binds. Helps modulate mRNA selection, yielding the 30S pre-initiation complex (PIC). Upon addition of the 50S ribosomal subunit IF-1, IF-2 and IF-3 are released leaving the mature 70S translation initiation complex. In Corynebacterium efficiens (strain DSM 44549 / YS-314 / AJ 12310 / JCM 11189 / NBRC 100395), this protein is Translation initiation factor IF-1.